The sequence spans 116 residues: Putative oxygen-evolving enhancer protein 1 (116 aa).

The protein belongs to the PsbO family.

Its subcellular location is the plastid. It is found in the chloroplast thylakoid membrane. In terms of biological role, stabilizes the manganese cluster which is the primary site of water splitting. The chain is Putative oxygen-evolving enhancer protein 1 from Pinus strobus (Eastern white pine).